The following is a 230-amino-acid chain: Large ribosomal subunit protein uL1 (230 aa).

It belongs to the universal ribosomal protein uL1 family. In terms of assembly, part of the 50S ribosomal subunit.

In terms of biological role, binds directly to 23S rRNA. The L1 stalk is quite mobile in the ribosome, and is involved in E site tRNA release. Functionally, protein L1 is also a translational repressor protein, it controls the translation of the L11 operon by binding to its mRNA. This is Large ribosomal subunit protein uL1 from Caldicellulosiruptor bescii (strain ATCC BAA-1888 / DSM 6725 / KCTC 15123 / Z-1320) (Anaerocellum thermophilum).